The primary structure comprises 173 residues: MPMKGRFPIRRTLQYLSQGNVVFKDSVKVMTVNYNTHGELGEGARKFVFFNIPQIQYKNPWVQIMMFKNMTPSPFLRFYLDSGEQVLVDVETKSNKEIMEHIRKILGKNEETLREEEEEKKQLSHPANFGPRKYCLRECICEVEGQVPCPSLVPLPKEMRGKYKAALKADAQD.

Belongs to the mitochondrion-specific ribosomal protein mS25 family. As to quaternary structure, component of the mitochondrial small ribosomal subunit (mt-SSU). Mature mammalian 55S mitochondrial ribosomes consist of a small (28S) and a large (39S) subunit. The 28S small subunit contains a 12S ribosomal RNA (12S mt-rRNA) and 30 different proteins. The 39S large subunit contains a 16S rRNA (16S mt-rRNA), a copy of mitochondrial valine transfer RNA (mt-tRNA(Val)), which plays an integral structural role, and 52 different proteins.

The protein localises to the mitochondrion. In Homo sapiens (Human), this protein is Small ribosomal subunit protein mS25 (MRPS25).